A 156-amino-acid polypeptide reads, in one-letter code: Small ribosomal subunit protein uS7 (156 aa).

It belongs to the universal ribosomal protein uS7 family. Part of the 30S ribosomal subunit. Contacts proteins S9 and S11.

In terms of biological role, one of the primary rRNA binding proteins, it binds directly to 16S rRNA where it nucleates assembly of the head domain of the 30S subunit. Is located at the subunit interface close to the decoding center, probably blocks exit of the E-site tRNA. This is Small ribosomal subunit protein uS7 from Aeromonas salmonicida (strain A449).